An 82-amino-acid chain; its full sequence is uncharacterized protein (82 aa).

Positions 1-19 (MKNLLKILLIIAFANPVFA) are cleaved as a signal peptide.

This is an uncharacterized protein from Rickettsia prowazekii (strain Madrid E).